Here is a 242-residue protein sequence, read N- to C-terminus: Small ribosomal subunit protein uS7m (242 aa).

The transit peptide at 1–37 (MAAPTAKVSRGWSGLALGVRIAVLRLPGLTQVRWSRY) directs the protein to the mitochondrion. Lys-228 is modified (N6-acetyllysine).

This sequence belongs to the universal ribosomal protein uS7 family. In terms of assembly, component of the mitochondrial ribosome small subunit (28S) which comprises a 12S rRNA and about 30 distinct proteins.

It localises to the mitochondrion. The polypeptide is Small ribosomal subunit protein uS7m (MRPS7) (Bos taurus (Bovine)).